Reading from the N-terminus, the 202-residue chain is Large ribosomal subunit protein bL25 (202 aa).

The protein belongs to the bacterial ribosomal protein bL25 family. CTC subfamily. In terms of assembly, part of the 50S ribosomal subunit; part of the 5S rRNA/L5/L18/L25 subcomplex. Contacts the 5S rRNA. Binds to the 5S rRNA independently of L5 and L18.

This is one of the proteins that binds to the 5S RNA in the ribosome where it forms part of the central protuberance. The polypeptide is Large ribosomal subunit protein bL25 (Paramagnetospirillum magneticum (strain ATCC 700264 / AMB-1) (Magnetospirillum magneticum)).